Reading from the N-terminus, the 344-residue chain is 5,10-methenyltetrahydromethanopterin hydrogenase (344 aa).

It belongs to the HMD family. In terms of assembly, homotetramer.

The catalysed reaction is 5,10-methenyl-5,6,7,8-tetrahydromethanopterin + H2 = 5,10-methylenetetrahydromethanopterin + H(+). It participates in one-carbon metabolism; methanogenesis from CO(2); 5,10-methylene-5,6,7,8-tetrahydromethanopterin from 5,10-methenyl-5,6,7,8-tetrahydromethanopterin (hydrogen route): step 1/1. Its activity is regulated as follows. Activity requires salt; 100 mM sodium or potassium salts of chloride, phosphate or sulfate are equally effective. Inactivated by O(2). In terms of biological role, catalyzes the reversible reduction of methenyl-H(4)MPT(+) to methylene-H(4)MPT. This chain is 5,10-methenyltetrahydromethanopterin hydrogenase, found in Methanothermobacter marburgensis (strain ATCC BAA-927 / DSM 2133 / JCM 14651 / NBRC 100331 / OCM 82 / Marburg) (Methanobacterium thermoautotrophicum).